Here is a 330-residue protein sequence, read N- to C-terminus: MAWTLLHSKLHQNLQRRFPELQGTRILVAVSGGQDSLCLLHLLNDLTKQWQWHLAVAHCDHRWPTDAGIADHVQGLAQGYKLPYFQRDAQDLPQTEAAARHWRYHALTAIAKAENFPVVMTGHTQSDRAETLLFNLVRGSGSDGLQAMNWVRNLEESGSDKSPIRLIRPLLEISRQETGDFCQQQQLSVWEDVLNEKLTYRRNRIRGELIPYLKKHFNPQVEKSLAQTVELLTAEVAYLEQVSGEIYQTLSQTDQKSLNCRLLSQKPLALQRRIIRQFLQSCQSQSPNFEEIEQIVGLINAPNRSQTSSLPGQGIVRVEGDFLRYIYQGK.

31–36 (SGGQDS) serves as a coordination point for ATP.

The protein belongs to the tRNA(Ile)-lysidine synthase family.

The protein localises to the cytoplasm. It catalyses the reaction cytidine(34) in tRNA(Ile2) + L-lysine + ATP = lysidine(34) in tRNA(Ile2) + AMP + diphosphate + H(+). Ligates lysine onto the cytidine present at position 34 of the AUA codon-specific tRNA(Ile) that contains the anticodon CAU, in an ATP-dependent manner. Cytidine is converted to lysidine, thus changing the amino acid specificity of the tRNA from methionine to isoleucine. In Synechocystis sp. (strain ATCC 27184 / PCC 6803 / Kazusa), this protein is tRNA(Ile)-lysidine synthase.